Consider the following 811-residue polypeptide: Potassium transporter 7 (811 aa).

At 1 to 52 (MPSYQYLLSLLFYILDCTDRFSVIVTIHNHRVGVLMIVLLQDQWKSYCRTIS) the chain is on the cytoplasmic side. A helical transmembrane segment spans residues 53 to 73 (LLAFQSFGVVYGDLSTSPLYV). Over 74-93 (YKSAFSGRLNNYRDETTIFG) the chain is Extracellular. Residues 94-114 (LFSLIFWTLTLLPLLKYVIIV) traverse the membrane as a helical segment. The Cytoplasmic segment spans residues 115 to 181 (LNADDNGEGG…EKHRKLRTCL (67 aa)). A helical membrane pass occupies residues 182–202 (LLFVLFGACMVIGDGVFTPAI). At 203-217 (SVLSAISGLKDPGPG) the chain is on the extracellular side. A helical transmembrane segment spans residues 218-238 (GIPDGWVVFIACIVLVGLFAL). Residues 239-245 (QHRGTHR) lie on the Cytoplasmic side of the membrane. The helical transmembrane segment at 246 to 266 (VAFMFAPIVVVWLLSIGVIGL) threads the bilayer. The Extracellular segment spans residues 267-296 (YNIIHWNHRIFLALSPHYVIKFFKMTGKDG). Residues 297 to 317 (WLSLGGVLLAITGTEAMFADL) traverse the membrane as a helical segment. Over 318 to 326 (GHFTAASIR) the chain is Cytoplasmic. Residues 327-347 (LAFVGAIYPCLVLQYMGQAAF) traverse the membrane as a helical segment. Over 348–366 (LSRNMSAVEDSFYQSVPRS) the chain is Extracellular. N-linked (GlcNAc...) asparagine glycosylation occurs at N351. Residues 367 to 387 (LFWPVFVIATLAAVVGSQSII) form a helical membrane-spanning segment. At 388–418 (SATFSIVKQCLSLGCFPRVKVVHTSRWIHGQ) the chain is on the cytoplasmic side. A helical membrane pass occupies residues 419–439 (IYIPEINWILMVLCLAVTLGF). At 440–450 (RDTTVIGNAYG) the chain is on the extracellular side. A helical membrane pass occupies residues 451–471 (LACIVVMFVTTWLMALVIIFV). Residues 472–475 (WQKN) lie on the Cytoplasmic side of the membrane. The chain crosses the membrane as a helical span at residues 476 to 496 (ILLALLFVVAFGSIEVVYLSA). At 497-503 (AVTKVPQ) the chain is on the extracellular side. The chain crosses the membrane as a helical span at residues 504 to 524 (GGWAPIVFAFVFMLVMYVWHY). The Cytoplasmic segment spans residues 525-811 (GSRRKYLFDL…LVEVGMIYYV (287 aa)). The tract at residues 680–702 (TGLVMRDSNNEASGTSLTRSSRS) is disordered.

It belongs to the HAK/KUP transporter (TC 2.A.72.3) family. Expressed in roots and shoots.

It localises to the membrane. In terms of biological role, high-affinity potassium transporter. The sequence is that of Potassium transporter 7 (HAK7) from Oryza sativa subsp. japonica (Rice).